We begin with the raw amino-acid sequence, 49 residues long: uncharacterized protein (49 aa).

This is an uncharacterized protein from Enterobacteria phage T3 (Bacteriophage T3).